Consider the following 306-residue polypeptide: Large ribosomal subunit protein bL19m (306 aa).

The segment covering 34–43 (ENQEEQKKEA) has biased composition (basic and acidic residues). Positions 34 to 53 (ENQEEQKKEAPPTTPTSPVN) are disordered.

The protein belongs to the bacterial ribosomal protein bL19 family. Component of the mitochondrial ribosome large subunit (39S) which comprises a 16S rRNA and about 50 distinct proteins.

It localises to the mitochondrion. In Drosophila melanogaster (Fruit fly), this protein is Large ribosomal subunit protein bL19m (mRpL19).